The sequence spans 296 residues: Lipoyl synthase (296 aa).

Positions 37, 42, 48, 63, 67, 70, and 276 each coordinate [4Fe-4S] cluster. Positions 49–265 (WSKKHTTVMI…ERLAKTKGFL (217 aa)) constitute a Radical SAM core domain.

This sequence belongs to the radical SAM superfamily. Lipoyl synthase family. [4Fe-4S] cluster is required as a cofactor.

Its subcellular location is the cytoplasm. It catalyses the reaction [[Fe-S] cluster scaffold protein carrying a second [4Fe-4S](2+) cluster] + N(6)-octanoyl-L-lysyl-[protein] + 2 oxidized [2Fe-2S]-[ferredoxin] + 2 S-adenosyl-L-methionine + 4 H(+) = [[Fe-S] cluster scaffold protein] + N(6)-[(R)-dihydrolipoyl]-L-lysyl-[protein] + 4 Fe(3+) + 2 hydrogen sulfide + 2 5'-deoxyadenosine + 2 L-methionine + 2 reduced [2Fe-2S]-[ferredoxin]. The protein operates within protein modification; protein lipoylation via endogenous pathway; protein N(6)-(lipoyl)lysine from octanoyl-[acyl-carrier-protein]: step 2/2. In terms of biological role, catalyzes the radical-mediated insertion of two sulfur atoms into the C-6 and C-8 positions of the octanoyl moiety bound to the lipoyl domains of lipoate-dependent enzymes, thereby converting the octanoylated domains into lipoylated derivatives. This is Lipoyl synthase from Rickettsia rickettsii (strain Iowa).